Reading from the N-terminus, the 804-residue chain is MVKDTYISSASKTPPMERTVRVTGMTCAMCVKSIETAVGSLEGVEEVRVNLATETAFIRFDEKRIDFETIKRVIEDLGYGVVDEQAAVSAEVEHLSRMKRKLYVAAFAGVLLLFLAHFISLPYEDFVQLLIALPAIFYSGSSIFKAAFSALRRRTLNMDVMYSMGVGAAFLASVLSTAGVLPREYSFYETSVLLLAFLLLGRTLEARAKSRTGEAIKKLVGLQAKTAVVIRDGKEIAVPVEEVAVGDIVIVRPGEKIPVDGVVVEGESYVDESMISGEPVPVLKSKGDEVFGATINNTGVLKIRATRVGGETLLAQIVKLVEDAMGSKPPIQRLADKVVAYFIPTVLLVAISAFIYWYFIAHAPLLFAFTTLIAVLVVACPCAFGLATPTALTVGMGKGAELGILIKNADALEVAEKVTAVIFDKTGTLTKGKPEVTDLVPLNGDERELLRLAAIAERRSEHPIAEAIVKKALEHGIELGEPEKVEVIAGEGVVADGILVGNKRLMEDFGVAVSNEVELALEKLEREAKTAVIVARNGRVEGIIAVSDTLKESAKPAVQELKRMGIKVGMITGDNWRSAEAISRELNLDLVIAEVLPHQKSEEVKKLQAKEVVAFVGDGINDAPALAQADLGIAVGSGSDVAVESGDIVLIRDDLRDVVAAIQLSRKTMSKIKQNIFWALIYNVILIPAAAGLLYPIFGVVFRPEFAGLAMAMSSVSVVANSLLLRNYVPPIRRGGDSVEKIVLELSGLSCHHCVARVKKALEEAGAKVEKVDLNEAVVAGNKEDVDKYIKAVEAAGYQAKLRS.

Over 1–101 (MVKDTYISSA…VEHLSRMKRK (101 aa)) the chain is Cytoplasmic. The region spanning 16-82 (MERTVRVTGM…VIEDLGYGVV (67 aa)) is the HMA 1 domain. 2 residues coordinate Cu(+): Cys-27 and Cys-30. A helical transmembrane segment spans residues 102 to 122 (LYVAAFAGVLLLFLAHFISLP). The Extracellular segment spans residues 123 to 128 (YEDFVQ). A helical membrane pass occupies residues 129-149 (LLIALPAIFYSGSSIFKAAFS). Residues 150–159 (ALRRRTLNMD) are Cytoplasmic-facing. The helical transmembrane segment at 160–180 (VMYSMGVGAAFLASVLSTAGV) threads the bilayer. Residues 181–186 (LPREYS) lie on the Extracellular side of the membrane. A helical membrane pass occupies residues 187-204 (FYETSVLLLAFLLLGRTL). Residues 205–339 (EARAKSRTGE…PIQRLADKVV (135 aa)) are Cytoplasmic-facing. The chain crosses the membrane as a helical span at residues 340 to 360 (AYFIPTVLLVAISAFIYWYFI). The Extracellular segment spans residues 361–364 (AHAP). Residues 365 to 385 (LLFAFTTLIAVLVVACPCAFG) form a helical membrane-spanning segment. The Cytoplasmic portion of the chain corresponds to 386–680 (LATPTALTVG…KIKQNIFWAL (295 aa)). Asp-424 serves as the catalytic 4-aspartylphosphate intermediate. ATP contacts are provided by residues 457–462 (ERRSEH) and 490–501 (GEGVVADGILVG). Residues Asp-618 and Asp-622 each contribute to the Mg(2+) site. The helical transmembrane segment at 681 to 701 (IYNVILIPAAAGLLYPIFGVV) threads the bilayer. At 702-704 (FRP) the chain is on the extracellular side. Residues 705–725 (EFAGLAMAMSSVSVVANSLLL) form a helical membrane-spanning segment. Residues 726–804 (RNYVPPIRRG…AAGYQAKLRS (79 aa)) lie on the Cytoplasmic side of the membrane. One can recognise an HMA 2 domain in the interval 740–801 (EKIVLELSGL…AVEAAGYQAK (62 aa)). Positions 751 and 754 each coordinate Cu(+).

This sequence belongs to the cation transport ATPase (P-type) (TC 3.A.3) family. Type IB subfamily. Interacts with CopZ probably in the CopZ Cu(+)-bound form.

It is found in the cell membrane. It catalyses the reaction Cu(+)(in) + ATP + H2O = Cu(+)(out) + ADP + phosphate + H(+). Its activity is regulated as follows. Activated by Cu(+) and Ag(+) and inhibited by vanadate. Activated by CopZ in its Cu(+)-bound form. Functionally, probably involved in copper and silver export. The protein is Probable copper-exporting P-type ATPase (copA) of Archaeoglobus fulgidus (strain ATCC 49558 / DSM 4304 / JCM 9628 / NBRC 100126 / VC-16).